The following is a 182-amino-acid chain: uncharacterized protein (182 aa).

Helical transmembrane passes span 58–78 (ILFG…YVVY) and 81–101 (PVSI…IIIW).

This sequence to M.jannaschii MJ0803.

The protein localises to the cell membrane. This is an uncharacterized protein from Methanocaldococcus jannaschii (strain ATCC 43067 / DSM 2661 / JAL-1 / JCM 10045 / NBRC 100440) (Methanococcus jannaschii).